The following is a 413-amino-acid chain: Serine hydroxymethyltransferase (413 aa).

Residues L119 and 123 to 125 (GHL) contribute to the (6S)-5,6,7,8-tetrahydrofolate site. Residue K228 is modified to N6-(pyridoxal phosphate)lysine. 351 to 353 (SPF) is a (6S)-5,6,7,8-tetrahydrofolate binding site.

This sequence belongs to the SHMT family. As to quaternary structure, homodimer. Requires pyridoxal 5'-phosphate as cofactor.

Its subcellular location is the cytoplasm. It carries out the reaction (6R)-5,10-methylene-5,6,7,8-tetrahydrofolate + glycine + H2O = (6S)-5,6,7,8-tetrahydrofolate + L-serine. Its pathway is one-carbon metabolism; tetrahydrofolate interconversion. It functions in the pathway amino-acid biosynthesis; glycine biosynthesis; glycine from L-serine: step 1/1. In terms of biological role, catalyzes the reversible interconversion of serine and glycine with tetrahydrofolate (THF) serving as the one-carbon carrier. This reaction serves as the major source of one-carbon groups required for the biosynthesis of purines, thymidylate, methionine, and other important biomolecules. Also exhibits THF-independent aldolase activity toward beta-hydroxyamino acids, producing glycine and aldehydes, via a retro-aldol mechanism. This Clostridium botulinum (strain ATCC 19397 / Type A) protein is Serine hydroxymethyltransferase.